A 141-amino-acid polypeptide reads, in one-letter code: Putative pre-16S rRNA nuclease (141 aa).

This sequence belongs to the YqgF nuclease family.

The protein localises to the cytoplasm. In terms of biological role, could be a nuclease involved in processing of the 5'-end of pre-16S rRNA. This Coxiella burnetii (strain RSA 331 / Henzerling II) protein is Putative pre-16S rRNA nuclease.